We begin with the raw amino-acid sequence, 176 residues long: MSRVAKAPVAIPAGVEVTLNEQTITVKGTKGSLTRVINTDVIVVVEDNEIKCSSVEGVKTNAQAGTARALINNMVVGVTEGFEKKLQLIGVGYRAKIAGNGVDLTLGFSHPLVHELPDGVSAVCPSQTEIVLTGTDKQLVGQVAAEIRGYRPPEPYKGKGVRYADEQVRRKEAKKK.

A compositionally biased stretch (basic and acidic residues) spans 156-170; that stretch reads YKGKGVRYADEQVRR. The tract at residues 156-176 is disordered; it reads YKGKGVRYADEQVRRKEAKKK.

The protein belongs to the universal ribosomal protein uL6 family. In terms of assembly, part of the 50S ribosomal subunit.

Its function is as follows. This protein binds to the 23S rRNA, and is important in its secondary structure. It is located near the subunit interface in the base of the L7/L12 stalk, and near the tRNA binding site of the peptidyltransferase center. The polypeptide is Large ribosomal subunit protein uL6 (Shewanella woodyi (strain ATCC 51908 / MS32)).